Here is a 155-residue protein sequence, read N- to C-terminus: 2-C-methyl-D-erythritol 2,4-cyclodiphosphate synthase (155 aa).

Residues Asp-10, His-12, and His-46 each contribute to the a divalent metal cation site. A 4-CDP-2-C-methyl-D-erythritol 2-phosphate-binding site is contributed by 10-12 (DSH). Residues 60 to 62 (DIG), 65 to 69 (FDEND), and Lys-140 each bind 4-CDP-2-C-methyl-D-erythritol 2-phosphate.

The protein belongs to the IspF family. Homotrimer. The cofactor is a divalent metal cation.

It catalyses the reaction 4-CDP-2-C-methyl-D-erythritol 2-phosphate = 2-C-methyl-D-erythritol 2,4-cyclic diphosphate + CMP. It participates in isoprenoid biosynthesis; isopentenyl diphosphate biosynthesis via DXP pathway; isopentenyl diphosphate from 1-deoxy-D-xylulose 5-phosphate: step 4/6. In terms of biological role, involved in the biosynthesis of isopentenyl diphosphate (IPP) and dimethylallyl diphosphate (DMAPP), two major building blocks of isoprenoid compounds. Catalyzes the conversion of 4-diphosphocytidyl-2-C-methyl-D-erythritol 2-phosphate (CDP-ME2P) to 2-C-methyl-D-erythritol 2,4-cyclodiphosphate (ME-CPP) with a corresponding release of cytidine 5-monophosphate (CMP). The polypeptide is 2-C-methyl-D-erythritol 2,4-cyclodiphosphate synthase (Mycoplasmoides gallisepticum (strain R(low / passage 15 / clone 2)) (Mycoplasma gallisepticum)).